A 108-amino-acid chain; its full sequence is MSATIVNTTDENFQADVLDAETPVLVDFWAGWCAPCKAIAPVLEELSNEYAGKVKIVKVDVTSCEDTAVKYNIRNIPALLMFKDGEVVAQQVGAAPRSKLAAFIDQNI.

The 107-residue stretch at 2 to 108 (SATIVNTTDE…KLAAFIDQNI (107 aa)) folds into the Thioredoxin domain. Cys-33 and Cys-36 are disulfide-bonded.

The protein belongs to the thioredoxin family.

Participates in various redox reactions through the reversible oxidation of its active center dithiol to a disulfide and catalyzes dithiol-disulfide exchange reactions. The chain is Thioredoxin C-2 from Corynebacterium nephridii.